Here is a 168-residue protein sequence, read N- to C-terminus: Secreted RxLR effector protein RXLR-C06 (168 aa).

The first 22 residues, 1–22 (MRIQLLWLSFAVLSTILSTCDA), serve as a signal peptide directing secretion. Residues 25-52 (DKLDPQRVQPNQNGSGHNQSIRSALKTS) are disordered. Residues 32-50 (VQPNQNGSGHNQSIRSALK) show a composition bias toward polar residues. N-linked (GlcNAc...) asparagine glycosylation is found at Asn37 and Asn42. A RxLR-dEER motif is present at residues 46-63 (RSALKTSHGKTIADDEER). The IQ domain occupies 78-107 (YKAIVAKLSKYFRDYHERREIRKQRILNKS). Asn105 carries N-linked (GlcNAc...) asparagine glycosylation.

It belongs to the RxLR effector family.

The protein localises to the secreted. Its subcellular location is the host Golgi apparatus. Secreted effector that suppresses pattern-triggered immunity (PTI) in plant host. The chain is Secreted RxLR effector protein RXLR-C06 from Plasmopara halstedii (Downy mildew of sunflower).